Here is a 333-residue protein sequence, read N- to C-terminus: Protein XAP5 CIRCADIAN TIMEKEEPER (333 aa).

Coiled coils occupy residues 12–43 and 70–116; these read AQDA…SDGQ and TREQ…VRGD. Over residues 89-98 the composition is skewed to basic and acidic residues; that stretch reads EKEKLQKLQQ. The tract at residues 89–171 is disordered; it reads EKEKLQKLQQ…REREAEEQAE (83 aa). The segment covering 123-136 has biased composition (acidic residues); it reads DEIENGSDEDEFEN. A compositionally biased stretch (basic and acidic residues) spans 160 to 171; that stretch reads PDREREAEEQAE.

This sequence belongs to the FAM50 family.

It is found in the nucleus. Functionally, involved in light regulation of the circadian clock and photomorphogenesis. The sequence is that of Protein XAP5 CIRCADIAN TIMEKEEPER (XCT) from Oryza sativa subsp. indica (Rice).